We begin with the raw amino-acid sequence, 301 residues long: TLR adapter interacting with SLC15A4 on the lysosome (301 aa).

Residues 290–294 (SLHIS) carry the pLxIS motif motif. Serine 294 carries the phosphoserine modification.

Interacts (via pLxIS motif) with IRF5; leading to IRF5 activation. Interacts with SLC15A4; leading to its recruitment to endolysosome. In terms of processing, the phosphorylated pLxIS motif constitutes an IRF5-binding motif, leading to recruitment of the transcription factor IRF5 to induce type-I interferons and other cytokines. Highly expressed in immune cell types such as B-cells, neutrophils, dendritic cells and monocytes, the expression levels are two-three-fold higher in female cells compared to male cells (at protein level). Expressed at low levels in T-cells and NK cells.

It localises to the lysosome membrane. The protein resides in the endosome membrane. It is found in the nucleus. Its subcellular location is the cytoplasm. In terms of biological role, innate immune adapter that mediates the recruitment and activation of IRF5 downstream of endolysosomal toll-like receptors TLR7, TLR8 and TLR9. Following recruitment to endolysosome by SLC15A4 downstream of TLR7, TLR8 and TLR9, specifically recruits IRF5 transcription factor via its pLxIS motif, leading to IRF5 activation and subsequent expression of type I interferons. Plays a role in the regulation of endolysosomal pH in immune cells such as B-cells, dendritic cells and monocytes. This chain is TLR adapter interacting with SLC15A4 on the lysosome, found in Homo sapiens (Human).